A 417-amino-acid polypeptide reads, in one-letter code: Serine hydroxymethyltransferase (417 aa).

(6S)-5,6,7,8-tetrahydrofolate is bound by residues leucine 121 and glycine 125–leucine 127. Position 229 is an N6-(pyridoxal phosphate)lysine (lysine 229). Serine 355–phenylalanine 357 contacts (6S)-5,6,7,8-tetrahydrofolate.

It belongs to the SHMT family. As to quaternary structure, homodimer. It depends on pyridoxal 5'-phosphate as a cofactor.

The protein resides in the cytoplasm. It catalyses the reaction (6R)-5,10-methylene-5,6,7,8-tetrahydrofolate + glycine + H2O = (6S)-5,6,7,8-tetrahydrofolate + L-serine. The protein operates within one-carbon metabolism; tetrahydrofolate interconversion. It participates in amino-acid biosynthesis; glycine biosynthesis; glycine from L-serine: step 1/1. Its function is as follows. Catalyzes the reversible interconversion of serine and glycine with tetrahydrofolate (THF) serving as the one-carbon carrier. This reaction serves as the major source of one-carbon groups required for the biosynthesis of purines, thymidylate, methionine, and other important biomolecules. Also exhibits THF-independent aldolase activity toward beta-hydroxyamino acids, producing glycine and aldehydes, via a retro-aldol mechanism. The chain is Serine hydroxymethyltransferase from Shewanella sp. (strain ANA-3).